We begin with the raw amino-acid sequence, 388 residues long: Chorismate synthase (388 aa).

Residues Arg-39 and Arg-45 each contribute to the NADP(+) site. A disordered region spans residues 95–115 (EKQKKIRRVSKPRPGHADLVG). Residues 98–108 (KKIRRVSKPRP) show a composition bias toward basic residues. FMN is bound by residues 130–132 (RSS), 251–252 (NA), Gly-296, 311–315 (KPIPT), and Arg-337.

This sequence belongs to the chorismate synthase family. Homotetramer. The cofactor is FMNH2.

The enzyme catalyses 5-O-(1-carboxyvinyl)-3-phosphoshikimate = chorismate + phosphate. The protein operates within metabolic intermediate biosynthesis; chorismate biosynthesis; chorismate from D-erythrose 4-phosphate and phosphoenolpyruvate: step 7/7. Functionally, catalyzes the anti-1,4-elimination of the C-3 phosphate and the C-6 proR hydrogen from 5-enolpyruvylshikimate-3-phosphate (EPSP) to yield chorismate, which is the branch point compound that serves as the starting substrate for the three terminal pathways of aromatic amino acid biosynthesis. This reaction introduces a second double bond into the aromatic ring system. This is Chorismate synthase from Enterococcus faecalis (strain ATCC 700802 / V583).